The chain runs to 244 residues: 23S rRNA (guanosine-2'-O-)-methyltransferase RlmB (244 aa).

G196, I216, and L225 together coordinate S-adenosyl-L-methionine.

Belongs to the class IV-like SAM-binding methyltransferase superfamily. RNA methyltransferase TrmH family. RlmB subfamily. Homodimer.

Its subcellular location is the cytoplasm. The catalysed reaction is guanosine(2251) in 23S rRNA + S-adenosyl-L-methionine = 2'-O-methylguanosine(2251) in 23S rRNA + S-adenosyl-L-homocysteine + H(+). Its function is as follows. Specifically methylates the ribose of guanosine 2251 in 23S rRNA. The protein is 23S rRNA (guanosine-2'-O-)-methyltransferase RlmB of Pectobacterium atrosepticum (strain SCRI 1043 / ATCC BAA-672) (Erwinia carotovora subsp. atroseptica).